Here is a 287-residue protein sequence, read N- to C-terminus: MAVVTMKQLLDSGTHFGHQTRRWNPKMKRFIFTDRNGIYIIDLQQTLTFIDKAYEFVKETVAHGGSVLFVGTKKQAQESVAAEATRVGMPYVNQRWLGGMLTNFSTVHKRLQRLKELEAMEQTGGFEGRTKKEILGLTREKNKLERSLGGIRDMAKVPSAIWVVDTNKEHIAVGEARKLGIPVIAILDTNCDPDEVDYPIPGNDDAIRSAALLTRVIASAVAEGLQARAGLGRADGKPEAEAAEPLAEWEQELLASATASATPSATASTTALTDAPAGATEPTTDAS.

Positions 254–277 (LASATASATPSATASTTALTDAPA) are enriched in low complexity. Positions 254 to 287 (LASATASATPSATASTTALTDAPAGATEPTTDAS) are disordered.

This sequence belongs to the universal ribosomal protein uS2 family.

In Mycobacterium tuberculosis (strain CDC 1551 / Oshkosh), this protein is Small ribosomal subunit protein uS2 (rpsB).